A 282-amino-acid polypeptide reads, in one-letter code: AB hydrolase superfamily protein FGSG_00045 (282 aa).

Positions M1–S10 are enriched in polar residues. Positions M1–T22 are disordered. Positions T22–I270 constitute an AB hydrolase-1 domain.

This sequence belongs to the AB hydrolase superfamily.

It functions in the pathway mycotoxin biosynthesis. Its function is as follows. AB hydrolase superfamily protein; part of the gene cluster that mediates the biosynthesis of gramillins A and B, bicyclic lipopeptides that induce cell death in maize leaves but not in wheat leaves. The nonribosomal peptide synthetase GRA1 incorporates respectively a glutamic adic (Glu), a leucine (Leu), a serine (Ser), a hydroxyglutamine (HOGln), a 2-amino decanoic acid, and 2 cysteins (CysB and CysA). The biosynthesis of 2-amino decanoic acid incorporated in gramillins could be initiated by a fatty acid synthase composed of the alpha and beta subunits FGSG_00036 and FGSG_11656. The cytochrome P450 monooxygenase FGSG_15680 could hydroxylate the fatty acid chain. Subsequent oxidation to the ketone by the oxidoreductase FGSG_00048 and transamination by aminotransferase FGSG_00049 could form 2-amino-decanoic acid. On the other hand, FGSG_15680 could also be responsible for the HO-modified glutamine at the gamma-position. Whether hydroxylation occurs on the fully assembled product or on the Gln residue prior to assembly into the gramillins requires further proof. The thioredoxin FGSG_00043 could also be required for the disulfide-bond formation between CysA and CysB. The specific involvement of the remaining proteins from the cluster is more difficult to discern, but could have broader regulatory (FGSG_00040 and FGSG_11657) or enzymatic functions (FGSG_00044 and FGSG_00045). The final C-domain of GRA1 does not possess the expected sequence of a termination CT domain, often implicated in macrocyclization and release of a cyclopeptidein fungal NRPs; and the thioesterase FGSG_00047 may act in concert with the terminal C-domain of GRA1 to catalyze the formation of the macrocyclic anhydride and release of the products. This chain is AB hydrolase superfamily protein FGSG_00045, found in Gibberella zeae (strain ATCC MYA-4620 / CBS 123657 / FGSC 9075 / NRRL 31084 / PH-1) (Wheat head blight fungus).